We begin with the raw amino-acid sequence, 79 residues long: Hemoglobin subunit zeta (79 aa).

Serine 1 carries the post-translational modification N-acetylserine. Residues 1–79 (SLTKTXXTII…FKLLSHXFLV (79 aa)) enclose the Globin domain. 2 positions are modified to phosphoserine: serine 38 and serine 53. Residue histidine 59 participates in heme b binding.

The protein belongs to the globin family. As to quaternary structure, heterotetramer of two zeta chains and two epsilon chains.

In terms of biological role, the zeta chain is an alpha-type chain of mammalian embryonic hemoglobin. The protein is Hemoglobin subunit zeta of Notamacropus eugenii (Tammar wallaby).